A 64-amino-acid polypeptide reads, in one-letter code: MFTLKKSLLLLFFLGTINLSLCEQERNAEEERRDEPDERNAEVEKRFFPIVGKLLSGLSGLLGK.

A signal peptide spans 1-22 (MFTLKKSLLLLFFLGTINLSLC). The propeptide occupies 23 to 46 (EQERNAEEERRDEPDERNAEVEKR). Leu62 carries the post-translational modification Leucine amide.

In terms of tissue distribution, expressed by the skin glands.

The protein localises to the secreted. Its function is as follows. Antimicrobial peptide with activity against Gram-positive and Gram-negative bacteria and against fungi. Has been tested against S.aureus (MIC=2.5 ug/mL), B.pumilus (MIC=5.0 ug/mL), B.cereus (MIC=30.0 ug/mL), E.coli (MIC=2.5 ug/mL), B.dysenteriae (MIC=5.0 ug/mL), A.cacoaceticus (MIC=30.0 ug/mL), P.aeruginosa (MIC=5.0 ug/mL) and C.albicans (MIC=2.5 ug/mL). Also shows a weak hemolytic activity. This Amolops loloensis (Lolokou Sucker Frog) protein is Temporin-ALf.